A 538-amino-acid polypeptide reads, in one-letter code: RNA-binding protein Ro60 (538 aa).

Position 1 is an N-acetylmethionine (methionine 1). Phosphoserine occurs at positions 4 and 19. Residues 16-369 (VVNSEGGCVW…TFKTVEPTGK (354 aa)) form the TROVE domain. The tract at residues 120–284 (RIPTHLFTFI…EMPLTALLRN (165 aa)) is RNA-binding. Residue lysine 224 is modified to N6-acetyllysine. The interval 361-538 (FKTVEPTGKR…VIRNFTLDVI (178 aa)) is VWFA-like domain. A divalent metal cation is bound by residues serine 378, serine 380, and threonine 445.

The protein belongs to the Ro 60 kDa family. As to quaternary structure, identified in a IGF2BP1-dependent mRNP granule complex containing untranslated mRNAs. Found in a complex with PUF60 and Y5 RNA. Interacts with RAB11FIP5. As to expression, highest in brain, followed by lung, muscle, kidney and heart. Lower levels are found in testis, liver and spleen.

Its subcellular location is the cytoplasm. In terms of biological role, RNA-binding protein that binds to misfolded non-coding RNAs, pre-5S rRNA, and several small cytoplasmic RNA molecules known as Y RNAs. May play roles in cilia formation and/or maintenance. The protein is RNA-binding protein Ro60 of Mus musculus (Mouse).